A 179-amino-acid chain; its full sequence is Translation initiation factor IF-3 (179 aa).

This sequence belongs to the IF-3 family. As to quaternary structure, monomer.

The protein localises to the cytoplasm. Its function is as follows. IF-3 binds to the 30S ribosomal subunit and shifts the equilibrium between 70S ribosomes and their 50S and 30S subunits in favor of the free subunits, thus enhancing the availability of 30S subunits on which protein synthesis initiation begins. This is Translation initiation factor IF-3 from Treponema pallidum (strain Nichols).